We begin with the raw amino-acid sequence, 138 residues long: Putative pre-16S rRNA nuclease (138 aa).

The protein belongs to the YqgF nuclease family.

It localises to the cytoplasm. Functionally, could be a nuclease involved in processing of the 5'-end of pre-16S rRNA. The protein is Putative pre-16S rRNA nuclease of Geobacillus kaustophilus (strain HTA426).